Reading from the N-terminus, the 802-residue chain is Phenylalanine--tRNA ligase beta subunit (802 aa).

One can recognise a tRNA-binding domain in the interval 40–155; it reads SASLKNVVVG…AHVETGVSAI (116 aa). In terms of domain architecture, B5 spans 409–484; that stretch reads KAVNKIETSL…RIYGYDEIPV (76 aa). Residues Asp-462, Asp-468, Glu-471, and Glu-472 each contribute to the Mg(2+) site. The FDX-ACB domain maps to 709-802; sequence PRYPEMTRDL…LQEKLHAIIR (94 aa).

This sequence belongs to the phenylalanyl-tRNA synthetase beta subunit family. Type 1 subfamily. Tetramer of two alpha and two beta subunits. Mg(2+) serves as cofactor.

It is found in the cytoplasm. It catalyses the reaction tRNA(Phe) + L-phenylalanine + ATP = L-phenylalanyl-tRNA(Phe) + AMP + diphosphate + H(+). This is Phenylalanine--tRNA ligase beta subunit from Listeria monocytogenes serotype 4b (strain F2365).